A 360-amino-acid chain; its full sequence is Probable CCR4-associated factor 1 homolog 1 (360 aa).

Aspartate 37, glutamate 39, aspartate 155, and aspartate 226 together coordinate a divalent metal cation.

This sequence belongs to the CAF1 family. In terms of assembly, component of the CCR4-NOT complex, at least composed of CRR4 and CAF1 proteins. The cofactor is a divalent metal cation.

Its subcellular location is the nucleus. The protein resides in the cytoplasm. It catalyses the reaction Exonucleolytic cleavage of poly(A) to 5'-AMP.. Functionally, ubiquitous transcription factor required for a diverse set of processes. It is a component of the CCR4 complex involved in the control of gene expression. This chain is Probable CCR4-associated factor 1 homolog 1 (CAF1-1), found in Arabidopsis thaliana (Mouse-ear cress).